The following is a 314-amino-acid chain: DNA-directed RNA polymerase subunit alpha (314 aa).

Residues 1 to 228 are alpha N-terminal domain (alpha-NTD); it reads MIEIEKPKIE…EHLSIFVNLT (228 aa). Residues 245–314 form an alpha C-terminal domain (alpha-CTD) region; sequence KEKVLEMTIE…DLGLSLRNEN (70 aa).

It belongs to the RNA polymerase alpha chain family. In terms of assembly, homodimer. The RNAP catalytic core consists of 2 alpha, 1 beta, 1 beta' and 1 omega subunit. When a sigma factor is associated with the core the holoenzyme is formed, which can initiate transcription.

The catalysed reaction is RNA(n) + a ribonucleoside 5'-triphosphate = RNA(n+1) + diphosphate. DNA-dependent RNA polymerase catalyzes the transcription of DNA into RNA using the four ribonucleoside triphosphates as substrates. The polypeptide is DNA-directed RNA polymerase subunit alpha (Listeria innocua serovar 6a (strain ATCC BAA-680 / CLIP 11262)).